The chain runs to 390 residues: UPF0496 protein At1g20180 (390 aa).

Helical transmembrane passes span 228–248 (LGGY…LIIA) and 250–270 (HSIL…FCLL).

This sequence belongs to the UPF0496 family.

The protein resides in the membrane. The protein is UPF0496 protein At1g20180 of Arabidopsis thaliana (Mouse-ear cress).